Here is a 486-residue protein sequence, read N- to C-terminus: Alpha-L-arabinofuranosidase B (486 aa).

Positions 1 to 25 are cleaved as a signal peptide; sequence MLSLKAVLRFASVAVAVVLPTLAQA. Asn-42 is a glycosylation site (N-linked (GlcNAc...) asparagine). The catalytic stretch occupies residues 45-342; the sequence is LVKQRADPQI…KLYWRSDGTP (298 aa). The active-site Proton acceptor is Asp-51. The active-site Proton donor is Glu-229. 3 N-linked (GlcNAc...) asparagine glycosylation sites follow: Asn-302, Asn-416, and Asn-426. Residues 359 to 467 form an ABD region; that stretch reads SSADQTLYVG…AGSYLVSGGN (109 aa).

This sequence belongs to the glycosyl hydrolase 43 family.

It localises to the secreted. The enzyme catalyses Hydrolysis of terminal non-reducing alpha-L-arabinofuranoside residues in alpha-L-arabinosides.. It participates in glycan metabolism; L-arabinan degradation. Its function is as follows. Secreted arabinofuranosidase that causes degradation of rice cell wall components during infection. Required for virulence. This is Alpha-L-arabinofuranosidase B from Pyricularia oryzae (strain 70-15 / ATCC MYA-4617 / FGSC 8958) (Rice blast fungus).